We begin with the raw amino-acid sequence, 187 residues long: UPF0301 protein VF_0434 (187 aa).

It belongs to the UPF0301 (AlgH) family.

This chain is UPF0301 protein VF_0434, found in Aliivibrio fischeri (strain ATCC 700601 / ES114) (Vibrio fischeri).